Here is a 596-residue protein sequence, read N- to C-terminus: MSDPCGTKPVQESNPTMSLWSLEDRHSSQGRPQPDQDPVAKEAPTSELQMKVDFFRKLGYSSSEIHSVLQKLGVQADTNTVLGELVKHGSATERECQALTAPSPQPPLVPRGGSTPKPSTLEPSLPEEDREGSDLRPVVIDGSNVAMSHGNKEVFSCRGILLAVNWFLERGHTDITVFVPSWRKEQPRPDVPITDQHILRELEKKKILVFTPSRRVGGKRVVCYDDRFIVKLAFESDGVVVSNDTYRDLQGERQEWKRFIEERLLMYSFVNDKFMPPDDPLGRHGPSLDNFLRKKPLPSEHRKQPCPYGKKCTYGIKCRFFHPERPSRPQRSVADELRANALLSPPRTPVKDKSSQRPSPASQSSSVSLEAEPGSLDGKKLGARSSPGPHREGSPQTCAPAGRSLPVSGGSFGPTEWLAHTQDSLPYTSQECLDSGIGSLESQMSELWGVRGGSPGESGPTRGPYAGYHSYGSKVPAAPSFSPFRPAMGAGHFSVPTDYVPPPPTYPSREYWSEPYPLPPPTPVLQEPQRPSPGAGGGPWGRVGDLAKERAGVYTKLCGVFPPHLVEAVMRRFPQLLDPQQLAAEILSYKSQHLSE.

Disordered regions lie at residues 1 to 48 (MSDP…TSEL) and 97 to 134 (QALT…EGSD). Over residues 10–19 (VQESNPTMSL) the composition is skewed to polar residues. Residues 42–87 (EAPTSELQMKVDFFRKLGYSSSEIHSVLQKLGVQADTNTVLGELVK) form a ubiquitin association domain region. The segment at 81–150 (VLGELVKHGS…DGSNVAMSHG (70 aa)) is necessary for interaction with TANK. An RNase region spans residues 112-281 (GGSTPKPSTL…DKFMPPDDPL (170 aa)). The RNase NYN domain occupies 135-290 (LRPVVIDGSN…LGRHGPSLDN (156 aa)). The interval 214 to 220 (RRVGGKR) is RNA binding. Aspartate 226 is a Mg(2+) binding site. Disordered stretches follow at residues 278-306 (DDPL…KQPC) and 340-417 (NALL…PTEW). The C3H1-type zinc-finger motif lies at 301–324 (HRKQPCPYGKKCTYGIKCRFFHPE). A necessary for interaction with ZC3H12D region spans residues 301–454 (HRKQPCPYGK…SELWGVRGGS (154 aa)). The residue at position 344 (serine 344) is a Phosphoserine. Over residues 356–368 (QRPSPASQSSSVS) the composition is skewed to low complexity. Residues serine 435 and serine 439 each carry the phosphoserine modification. The tract at residues 511-543 (YWSEPYPLPPPTPVLQEPQRPSPGAGGGPWGRV) is disordered. Positions 524-533 (VLQEPQRPSP) are enriched in low complexity.

The protein belongs to the ZC3H12 family. In terms of assembly, oligomer. Found in a deubiquitination complex with TANK, USP10 and ZC3H12A; this complex inhibits genotoxic stress- or interleukin-1-beta-mediated NF-kappaB activation by promoting IKBKG or TRAF6 deubiquitination. Interacts with IKBKG; this interaction increases in response to DNA damage. Interacts with TANK; this interaction increases in response to DNA damage and serves as a bridge to anchor both TANK and USP10 into a deubiquitinating complex. Interacts with TRAF6; this interaction increases in response to DNA damage and is stimulated by TANK. Interacts with USP10; this interaction increases in response to DNA damage and serves as a bridge to anchor both TANK and USP10 into a deubiquitinating complex. Interacts with ZC3H12D. Interacts with TNRC6A. Interacts with IKBKB/IKKB. Interacts with IKBKB/IKKB. Interacts with IKBKB/IKKB. Interacts with BTRC; the interaction occurs when ZC3H12A is phosphorylated in a IKBKB/IKKB-dependent manner. Interacts with IRAK1; this interaction increases the interaction between ZC3H12A and IKBKB/IKKB. Interacts with UPF1; this interaction occurs in a mRNA translationally active- and termination-dependent manner and is essential for ZC3H12A-mediated degradation of target mRNAs. Associates with ribosomes. Interacts with ubiquitin. Mg(2+) is required as a cofactor. Proteolytically cleaved between Arg-111 and Arg-214 by MALT1 in activated T-cells; cleavage at Arg-111 is critical for promoting ZC3H12A degradation in response to T-cell receptor (TCR) stimulation, and hence is necessary for prolonging the stability of a set of mRNAs controlling T-cell activation and Th17 cell differentiation. In terms of processing, phosphorylated by IRAK1; phosphorylation is necessary for subsequent phosphorylation by the I-kappa-B-kinase (IKK) complex. Phosphorylated by I-kappa-B-kinases (IKKs) at Ser-435 and Ser-439 upon lipopolysaccharide (LPS) or IL1B stimulation in macrophages through the MyD88-dependent signaling pathway; these phosphorylations promote rapid ubiquitin proteasome-mediated degradation of ZC3H12A in macrophages and hence allows its target mRNAs, such as IL6, to escape from degradation and accumulate during the inflammatory response. Post-translationally, ubiquitinated; ubiquitination is induced in response to interleukin IL1 receptor stimuli in a IKBKB/IKKB and IRAK1-dependent manner, leading to proteasome-mediated degradation. Expressed in CD4(+) helper T-cells (at protein level). Highly expressed in macrophages. Expressed in lung, lymph nodes, spleen and thymus. Expressed weakly in heart. Expressed weakly in cardiomyocytes (at protein level). Expressed in spleen, lung, intestine, brown adipose tissue and thymus. Weakly expressed in the heart. Weakly expressed in cardiomyocytes.

It localises to the nucleus. Its subcellular location is the cytoplasm. The protein localises to the rough endoplasmic reticulum membrane. The protein resides in the cytoplasmic granule. It is found in the P-body. Endoribonuclease involved in various biological functions such as cellular inflammatory response and immune homeostasis, glial differentiation of neuroprogenitor cells, cell death of cardiomyocytes, adipogenesis and angiogenesis. Functions as an endoribonuclease involved in mRNA decay. Modulates the inflammatory response by promoting the degradation of a set of translationally active cytokine-induced inflammation-related mRNAs, such as IL6 and IL12B, during the early phase of inflammation. Prevents aberrant T-cell-mediated immune reaction by degradation of multiple mRNAs controlling T-cell activation, such as those encoding cytokines (IL6 and IL2), cell surface receptors (ICOS, TNFRSF4 and TNFR2) and transcription factor (REL). Inhibits cooperatively with ZC3H12A the differentiation of helper T cells Th17 in lungs. They repress target mRNA encoding the Th17 cell-promoting factors IL6, ICOS, REL, IRF4, NFKBID and NFKBIZ. The cooperation requires RNA-binding by RC3H1 and the nuclease activity of ZC3H12A. Together with RC3H1, destabilizes TNFRSF4/OX40 mRNA by binding to the conserved stem loop structure in its 3'UTR. Self regulates by destabilizing its own mRNA. Cleaves mRNA harboring a stem-loop (SL), often located in their 3'-UTRs, during the early phase of inflammation in a helicase UPF1-dependent manner. Plays a role in the inhibition of microRNAs (miRNAs) biogenesis. Cleaves the terminal loop of a set of precursor miRNAs (pre-miRNAs) important for the regulation of the inflammatory response leading to their degradation, and thus preventing the biosynthesis of mature miRNAs. Also plays a role in promoting angiogenesis in response to inflammatory cytokines by inhibiting the production of antiangiogenic microRNAs via its anti-dicer RNase activity. Affects the overall ubiquitination of cellular proteins. Positively regulates deubiquitinase activity promoting the cleavage at 'Lys-48'- and 'Lys-63'-linked polyubiquitin chains on TNF receptor-associated factors (TRAFs), preventing JNK and NF-kappa-B signaling pathway activation, and hence negatively regulating macrophage-mediated inflammatory response and immune homeostasis. Induces also deubiquitination of the transcription factor HIF1A, probably leading to its stabilization and nuclear import, thereby positively regulating the expression of proangiogenic HIF1A-targeted genes. Involved in a TANK-dependent negative feedback response to attenuate NF-kappaB activation through the deubiquitination of IKBKG or TRAF6 in response to interleukin-1-beta (IL1B) stimulation or upon DNA damage. Prevents stress granules (SGs) formation and promotes macrophage apoptosis under stress conditions, including arsenite-induced oxidative stress, heat shock, and energy deprivation. Plays a role in the regulation of macrophage polarization; promotes IL4-induced polarization of macrophages M1 into anti-inflammatory M2 state. May also act as a transcription factor that regulates the expression of multiple genes involved in inflammatory response, angiogenesis, adipogenesis and apoptosis. Functions as a positive regulator of glial differentiation of neuroprogenitor cells through an amyloid precursor protein (APP)-dependent signaling pathway. Attenuates septic myocardial contractile dysfunction in response to lipopolysaccharide (LPS) by reducing I-kappa-B-kinase (IKK)-mediated NF-kappa-B activation, and hence myocardial pro-inflammatory cytokine production. The sequence is that of Endoribonuclease ZC3H12A from Mus musculus (Mouse).